A 461-amino-acid polypeptide reads, in one-letter code: MLEFLSQQKPKILIIGDFMVDNYTWCDCSRISPEAPVLVAKTLKEDKRLGGAANVYANLKSLGADVFALGVVGDDESGKFLQENLKGEFLIQKGRKTPFKNRIMAHNQQVLRLDEEDTSEILLENELIALFDEKIKDFKAVVLSDYAKGILTPKVCKALIKKAKALNIPVLVDPKGSDFSKYSGATLLTPNKKEALEALKFENLEGENLEKGIKKLKEDFALRYSIITLSEAGIALFDKSLKIAPAKALEVYDVTGAGDSVIAVLAFCLANGVEIFKACELANEAAAVVVGKIGSVSVSFDEIKSFNRVDFEKKIKSKEELLTLLKQKDKKIVFTNGCFDIVHFGHIKYLEKAKRLGDVLIVGLNSDASVKKLKGESRPVNSEFQRACMLAAFYFVDFVVIFDEDTPLELISFLKPDILVKGADYKDKIVVGADIVSKVELIDFEEGFSTSKIIEKIKDKK.

A ribokinase region spans residues 1-312; it reads MLEFLSQQKP…IKSFNRVDFE (312 aa). 191 to 194 contacts ATP; sequence NKKE. Asp259 is an active-site residue. The interval 334–461 is cytidylyltransferase; that stretch reads FTNGCFDIVH…KIIEKIKDKK (128 aa).

In the N-terminal section; belongs to the carbohydrate kinase PfkB family. The protein in the C-terminal section; belongs to the cytidylyltransferase family. As to quaternary structure, homodimer.

It carries out the reaction D-glycero-beta-D-manno-heptose 7-phosphate + ATP = D-glycero-beta-D-manno-heptose 1,7-bisphosphate + ADP + H(+). It catalyses the reaction D-glycero-beta-D-manno-heptose 1-phosphate + ATP + H(+) = ADP-D-glycero-beta-D-manno-heptose + diphosphate. The protein operates within nucleotide-sugar biosynthesis; ADP-L-glycero-beta-D-manno-heptose biosynthesis; ADP-L-glycero-beta-D-manno-heptose from D-glycero-beta-D-manno-heptose 7-phosphate: step 1/4. It participates in nucleotide-sugar biosynthesis; ADP-L-glycero-beta-D-manno-heptose biosynthesis; ADP-L-glycero-beta-D-manno-heptose from D-glycero-beta-D-manno-heptose 7-phosphate: step 3/4. Functionally, catalyzes the phosphorylation of D-glycero-D-manno-heptose 7-phosphate at the C-1 position to selectively form D-glycero-beta-D-manno-heptose-1,7-bisphosphate. Catalyzes the ADP transfer from ATP to D-glycero-beta-D-manno-heptose 1-phosphate, yielding ADP-D-glycero-beta-D-manno-heptose. The protein is Bifunctional protein HldE of Campylobacter jejuni subsp. doylei (strain ATCC BAA-1458 / RM4099 / 269.97).